Consider the following 447-residue polypeptide: GTPase Der (447 aa).

EngA-type G domains follow at residues 3 to 167 (PVIA…VQER) and 181 to 354 (VKIA…AAAM). GTP contacts are provided by residues 9-16 (GRPNVGKS), 56-60 (DTGGF), 119-122 (NKAE), 187-194 (GRPNVGKS), 234-238 (DTAGL), and 299-302 (NKWD). Residues 355–439 (VKLPTPQLTR…PLRIEFRTNK (85 aa)) form the KH-like domain.

The protein belongs to the TRAFAC class TrmE-Era-EngA-EngB-Septin-like GTPase superfamily. EngA (Der) GTPase family. Associates with the 50S ribosomal subunit.

Functionally, GTPase that plays an essential role in the late steps of ribosome biogenesis. The sequence is that of GTPase Der from Cupriavidus taiwanensis (strain DSM 17343 / BCRC 17206 / CCUG 44338 / CIP 107171 / LMG 19424 / R1) (Ralstonia taiwanensis (strain LMG 19424)).